The chain runs to 101 residues: Small ribosomal subunit protein uS14 (101 aa).

The span at 1 to 11 (MAKKSAIETNE) shows a compositional bias: basic and acidic residues. Residues 1-20 (MAKKSAIETNERRRKLATGH) are disordered.

The protein belongs to the universal ribosomal protein uS14 family. Part of the 30S ribosomal subunit. Contacts proteins S3 and S10.

Binds 16S rRNA, required for the assembly of 30S particles and may also be responsible for determining the conformation of the 16S rRNA at the A site. The sequence is that of Small ribosomal subunit protein uS14 from Xanthobacter autotrophicus (strain ATCC BAA-1158 / Py2).